Here is a 241-residue protein sequence, read N- to C-terminus: 1-(5-phosphoribosyl)-5-[(5-phosphoribosylamino)methylideneamino] imidazole-4-carboxamide isomerase (241 aa).

Catalysis depends on aspartate 8, which acts as the Proton acceptor. Aspartate 129 (proton donor) is an active-site residue.

It belongs to the HisA/HisF family.

It is found in the cytoplasm. The enzyme catalyses 1-(5-phospho-beta-D-ribosyl)-5-[(5-phospho-beta-D-ribosylamino)methylideneamino]imidazole-4-carboxamide = 5-[(5-phospho-1-deoxy-D-ribulos-1-ylimino)methylamino]-1-(5-phospho-beta-D-ribosyl)imidazole-4-carboxamide. It participates in amino-acid biosynthesis; L-histidine biosynthesis; L-histidine from 5-phospho-alpha-D-ribose 1-diphosphate: step 4/9. The chain is 1-(5-phosphoribosyl)-5-[(5-phosphoribosylamino)methylideneamino] imidazole-4-carboxamide isomerase from Novosphingobium aromaticivorans (strain ATCC 700278 / DSM 12444 / CCUG 56034 / CIP 105152 / NBRC 16084 / F199).